The following is a 414-amino-acid chain: MSQNKRVVITGMGALSPIGNDVKTTWENALKGVNGIDKITRIDTEPYSVHLAGELKNFNIEDHIDKKEARRMDRFTQYAIVAAREAVKDAQLDINENTADRIGVWIGSGIGGMETFEIAHKQLMDKGPRRVSPFFVPMLIPDMATGQVSIDLGAKGPNGATVTACATGTNSIGEAFKIVQRGDADAMITGGTEAPITHMAIAGFSASRALSTNDDIETACRPFQEGRDGFVMGEGAGILVIESLESAQARGANIYAEIVGYGTTGDAYHITAPAPEGEGGSRAMQAAMDDAGIEPKDVQYLNAHGTSTPVGDLNEVKAIKNTFGEAAKHLKVSSTKSMTGHLLGATGGIEAIFSALSIKDSKVAPTIHAVTPDPECDLDIVPNEAQDLDITYAMSNSLGFGGHNAVLVFKKFEA.

In terms of domain architecture, Ketosynthase family 3 (KS3) spans 4–411 (NKRVVITGMG…GHNAVLVFKK (408 aa)). Residues Cys165, His304, and His341 each act as for beta-ketoacyl synthase activity in the active site.

This sequence belongs to the thiolase-like superfamily. Beta-ketoacyl-ACP synthases family.

It carries out the reaction a fatty acyl-[ACP] + malonyl-[ACP] + H(+) = a 3-oxoacyl-[ACP] + holo-[ACP] + CO2. The catalysed reaction is (9Z)-hexadecenoyl-[ACP] + malonyl-[ACP] + H(+) = 3-oxo-(11Z)-octadecenoyl-[ACP] + holo-[ACP] + CO2. The protein operates within lipid metabolism; fatty acid biosynthesis. Functionally, involved in the type II fatty acid elongation cycle. Catalyzes the elongation of a wide range of acyl-ACP by the addition of two carbons from malonyl-ACP to an acyl acceptor. Can efficiently catalyze the conversion of palmitoleoyl-ACP (cis-hexadec-9-enoyl-ACP) to cis-vaccenoyl-ACP (cis-octadec-11-enoyl-ACP), an essential step in the thermal regulation of fatty acid composition. In Staphylococcus aureus (strain MW2), this protein is 3-oxoacyl-[acyl-carrier-protein] synthase 2 (fabF).